Here is a 362-residue protein sequence, read N- to C-terminus: Phosphoserine aminotransferase (362 aa).

L-glutamate is bound by residues Ser9 and Arg42. Residues 76–77 (GR), Trp102, Thr153, Asp174, and Gln197 contribute to the pyridoxal 5'-phosphate site. An N6-(pyridoxal phosphate)lysine modification is found at Lys198. A pyridoxal 5'-phosphate-binding site is contributed by 239–240 (NT).

Belongs to the class-V pyridoxal-phosphate-dependent aminotransferase family. SerC subfamily. Homodimer. It depends on pyridoxal 5'-phosphate as a cofactor.

It is found in the cytoplasm. It catalyses the reaction O-phospho-L-serine + 2-oxoglutarate = 3-phosphooxypyruvate + L-glutamate. It carries out the reaction 4-(phosphooxy)-L-threonine + 2-oxoglutarate = (R)-3-hydroxy-2-oxo-4-phosphooxybutanoate + L-glutamate. It participates in amino-acid biosynthesis; L-serine biosynthesis; L-serine from 3-phospho-D-glycerate: step 2/3. Its pathway is cofactor biosynthesis; pyridoxine 5'-phosphate biosynthesis; pyridoxine 5'-phosphate from D-erythrose 4-phosphate: step 3/5. Its function is as follows. Catalyzes the reversible conversion of 3-phosphohydroxypyruvate to phosphoserine and of 3-hydroxy-2-oxo-4-phosphonooxybutanoate to phosphohydroxythreonine. The chain is Phosphoserine aminotransferase from Escherichia coli O17:K52:H18 (strain UMN026 / ExPEC).